The chain runs to 335 residues: Galactosylgalactosylxylosylprotein 3-beta-glucuronosyltransferase 3 (335 aa).

Residues 1–7 lie on the Cytoplasmic side of the membrane; it reads MKLKLKN. Residues 8–28 traverse the membrane as a helical; Signal-anchor for type II membrane protein segment; sequence VFLAYFLVSIAGLLYALVQLG. The Lumenal segment spans residues 29–335; it reads QPCDCLPPLR…GQGSDPAIEV (307 aa). Residues 82–84, D113, R156, R161, and 194–196 contribute to the UDP-alpha-D-glucuronate site; these read PTY and DDD. D196 contributes to the Mn(2+) binding site. The interval 243-252 is interaction with galactose moiety of substrate glycoprotein; the sequence is WEPNRPFPLD. The Proton donor/acceptor role is filled by E281. N-linked (GlcNAc...) asparagine glycosylation is present at N300. 308–310 serves as a coordination point for UDP-alpha-D-glucuronate; sequence HTR. Basic and acidic residues predominate over residues 312–322; the sequence is EKPKMKQEEQL. Residues 312 to 335 form a disordered region; the sequence is EKPKMKQEEQLQRQGQGSDPAIEV.

This sequence belongs to the glycosyltransferase 43 family. Homodimer; disulfide-linked. Interacts with PXYLP1; the interaction increases the 2-phosphoxylose phosphatase activity of PXYLP1 during completion of linkage region formation in a B3GAT3-mediated manner. It depends on Mn(2+) as a cofactor. Post-translationally, N-glycosylated. In terms of tissue distribution, expressed in heart, aorta, bone, and also in osteoblasts.

Its subcellular location is the golgi apparatus membrane. The protein localises to the golgi apparatus. It localises to the cis-Golgi network. The catalysed reaction is 3-O-(beta-D-galactosyl-(1-&gt;3)-beta-D-galactosyl-(1-&gt;4)-beta-D-xylosyl)-L-seryl-[protein] + UDP-alpha-D-glucuronate = 3-O-(beta-D-GlcA-(1-&gt;3)-beta-D-Gal-(1-&gt;3)-beta-D-Gal-(1-&gt;4)-beta-D-Xyl)-L-seryl-[protein] + UDP + H(+). It functions in the pathway protein modification; protein glycosylation. Its function is as follows. Glycosaminoglycans biosynthesis. Involved in forming the linkage tetrasaccharide present in heparan sulfate and chondroitin sulfate. Transfers a glucuronic acid moiety from the uridine diphosphate-glucuronic acid (UDP-GlcUA) to the common linkage region trisaccharide Gal-beta-1,3-Gal-beta-1,4-Xyl covalently bound to a Ser residue at the glycosaminylglycan attachment site of proteoglycans. Can also play a role in the biosynthesis of l2/HNK-1 carbohydrate epitope on glycoproteins. Stimulates 2-phosphoxylose phosphatase activity of PXYLP1 in presence of uridine diphosphate-glucuronic acid (UDP-GlcUA) during completion of linkage region formation. The chain is Galactosylgalactosylxylosylprotein 3-beta-glucuronosyltransferase 3 (B3gat3) from Mus musculus (Mouse).